We begin with the raw amino-acid sequence, 832 residues long: Elongation factor 2 (832 aa).

Residues 17–336 (HNIRNMSVIA…MIVTHLPSPA (320 aa)) enclose the tr-type G domain. 26–33 (AHVDHGKS) is a binding site for GTP. Phosphothreonine occurs at positions 57 and 59. GTP is bound by residues 152 to 155 (NKVD) and 207 to 209 (SGL). The interval 580 to 608 (AEPLPDGLTDDIEEGKVSPRDDPKERSNL) is disordered. Positions 593 to 608 (EGKVSPRDDPKERSNL) are enriched in basic and acidic residues. His689 carries the diphthamide modification.

This sequence belongs to the TRAFAC class translation factor GTPase superfamily. Classic translation factor GTPase family. EF-G/EF-2 subfamily.

It localises to the cytoplasm. The enzyme catalyses GTP + H2O = GDP + phosphate + H(+). Its function is as follows. Catalyzes the GTP-dependent ribosomal translocation step during translation elongation. During this step, the ribosome changes from the pre-translocational (PRE) to the post-translocational (POST) state as the newly formed A-site-bound peptidyl-tRNA and P-site-bound deacylated tRNA move to the P and E sites, respectively. Catalyzes the coordinated movement of the two tRNA molecules, the mRNA and conformational changes in the ribosome. The protein is Elongation factor 2 of Cryptosporidium parvum.